Here is a 132-residue protein sequence, read N- to C-terminus: Small ribosomal subunit protein bS6 (132 aa).

The disordered stretch occupies residues histidine 96 to arginine 132. Residues glutamine 105–arginine 132 are compositionally biased toward basic and acidic residues.

This sequence belongs to the bacterial ribosomal protein bS6 family.

In terms of biological role, binds together with bS18 to 16S ribosomal RNA. This chain is Small ribosomal subunit protein bS6, found in Cereibacter sphaeroides (strain ATCC 17023 / DSM 158 / JCM 6121 / CCUG 31486 / LMG 2827 / NBRC 12203 / NCIMB 8253 / ATH 2.4.1.) (Rhodobacter sphaeroides).